The chain runs to 165 residues: MAKMNLSSYILILTFSLFSQGILLSASKSIRNLDDDMVFNTFRLGKGFQKEDTAEKSVIAPSLEQYKNDESSFMNEEENKVSKNTGSKHNFLNHGLPLNLAIKPYLALKGSVAFPAENGVQNTESTQEKREIGDEENSAKFPIGRRDFDMLRCMLGRVYRPCWQV.

Residues 1 to 21 form the signal peptide; sequence MAKMNLSSYILILTFSLFSQG. The residue at position 143 (I143) is an Isoleucine amide. A disulfide bridge connects residues C153 and C162.

Belongs to the melanin-concentrating hormone family. Differentially processed in the brain and in peripheral organs producing two neuropeptides; NEI and MCH. A third peptide, NGE, may also be produced. Preferential processing in neurons by prohormone convertase 2 (PC2) generates NEI. MCH is generated in neurons of the lateral hypothalmic area by several prohormone convertases including PC1/3, PC2 and PC5/6. Predominantly expressed in lateral hypothalamus, also detected in pallidum, neocortex and cerebellum. Also found in thymus, brown adipose tissue, duodenum and testis (spermatogonia, early spermatocytes and Sertoli cells). No expression in peripheral blood. In brain exclusively mature MCH and NEI peptides are present. In peripheral tissues a large product, encompassing the NEI and MCH domains of the precursor, is found predominantly.

The protein localises to the secreted. MCH may act as a neurotransmitter or neuromodulator in a broad array of neuronal functions directed toward the regulation of goal-directed behavior, such as food intake, and general arousal. May also have a role in spermatocyte differentiation. The sequence is that of Pro-MCH (PMCH) from Homo sapiens (Human).